The primary structure comprises 238 residues: Putative pectate lyase X (238 aa).

Positions 1–22 (MKYLLPTAAAGLLLLAAQPAMA) are cleaved as a signal peptide. Positions 153, 188, and 192 each coordinate Ca(2+).

It belongs to the polysaccharide lyase 1 family. Ca(2+) is required as a cofactor.

The enzyme catalyses Eliminative cleavage of (1-&gt;4)-alpha-D-galacturonan to give oligosaccharides with 4-deoxy-alpha-D-galact-4-enuronosyl groups at their non-reducing ends.. It participates in glycan metabolism; pectin degradation; 2-dehydro-3-deoxy-D-gluconate from pectin: step 2/5. Involved in maceration and soft-rotting of plant tissue. The chain is Putative pectate lyase X (PEL X) from Pectobacterium carotovorum (Erwinia carotovora).